The chain runs to 626 residues: UvrABC system protein C (626 aa).

The region spanning 26-105 is the GIY-YIG domain; that stretch reads QEPGVYFMGD…IKQHQPHFNV (80 aa). The UVR domain maps to 215-250; the sequence is QELHQLLTQQMEKAAADLKFEQAALIRDQINSLGKL.

The protein belongs to the UvrC family. Interacts with UvrB in an incision complex.

It is found in the cytoplasm. The UvrABC repair system catalyzes the recognition and processing of DNA lesions. UvrC both incises the 5' and 3' sides of the lesion. The N-terminal half is responsible for the 3' incision and the C-terminal half is responsible for the 5' incision. In Synechocystis sp. (strain ATCC 27184 / PCC 6803 / Kazusa), this protein is UvrABC system protein C.